Here is a 633-residue protein sequence, read N- to C-terminus: Chaperone protein DnaK (633 aa).

T198 bears the Phosphothreonine; by autocatalysis mark.

Belongs to the heat shock protein 70 family.

Its function is as follows. Acts as a chaperone. The protein is Chaperone protein DnaK of Rhodopseudomonas palustris (strain HaA2).